Reading from the N-terminus, the 187-residue chain is ATP synthase subunit delta, chloroplastic (187 aa).

It belongs to the ATPase delta chain family. As to quaternary structure, F-type ATPases have 2 components, F(1) - the catalytic core - and F(0) - the membrane proton channel. F(1) has five subunits: alpha(3), beta(3), gamma(1), delta(1), epsilon(1). CF(0) has four main subunits: a(1), b(1), b'(1) and c(10-14). The alpha and beta chains form an alternating ring which encloses part of the gamma chain. F(1) is attached to F(0) by a central stalk formed by the gamma and epsilon chains, while a peripheral stalk is formed by the delta, b and b' chains.

It localises to the plastid. The protein localises to the chloroplast thylakoid membrane. Its function is as follows. F(1)F(0) ATP synthase produces ATP from ADP in the presence of a proton or sodium gradient. F-type ATPases consist of two structural domains, F(1) containing the extramembraneous catalytic core and F(0) containing the membrane proton channel, linked together by a central stalk and a peripheral stalk. During catalysis, ATP synthesis in the catalytic domain of F(1) is coupled via a rotary mechanism of the central stalk subunits to proton translocation. In terms of biological role, this protein is part of the stalk that links CF(0) to CF(1). It either transmits conformational changes from CF(0) to CF(1) or is implicated in proton conduction. The protein is ATP synthase subunit delta, chloroplastic of Thalassiosira pseudonana (Marine diatom).